A 149-amino-acid chain; its full sequence is Transcriptional repressor NrdR (149 aa).

The segment at 3–34 (CPFCSENDTKVIDSRLVADGHQVRRRRQCLAC) is a zinc-finger region. An ATP-cone domain is found at 49-139 (PKVIKSNGNR…VYRSFEDIRE (91 aa)).

This sequence belongs to the NrdR family. Zn(2+) is required as a cofactor.

In terms of biological role, negatively regulates transcription of bacterial ribonucleotide reductase nrd genes and operons by binding to NrdR-boxes. The polypeptide is Transcriptional repressor NrdR (Vibrio vulnificus (strain YJ016)).